Consider the following 229-residue polypeptide: Potassium/proton antiporter CemA (229 aa).

4 helical membrane-spanning segments follow: residues 7-27, 114-134, 154-174, and 189-209; these read FTPLPYLASIVFLPWWISFSF, IISFAILSGYSILGNEELVVL, ILLLTDLCIGFHSPHGWELMI, and IISGLVSTFPVILDTIFKYWI.

Belongs to the CemA family.

Its subcellular location is the plastid. It is found in the chloroplast inner membrane. It carries out the reaction K(+)(in) + H(+)(out) = K(+)(out) + H(+)(in). In terms of biological role, contributes to K(+)/H(+) antiport activity by supporting proton efflux to control proton extrusion and homeostasis in chloroplasts in a light-dependent manner to modulate photosynthesis. Prevents excessive induction of non-photochemical quenching (NPQ) under continuous-light conditions. Indirectly promotes efficient inorganic carbon uptake into chloroplasts. This Nandina domestica (Heavenly bamboo) protein is Potassium/proton antiporter CemA.